The sequence spans 303 residues: Glycine--tRNA ligase alpha subunit (303 aa).

Belongs to the class-II aminoacyl-tRNA synthetase family. As to quaternary structure, tetramer of two alpha and two beta subunits.

It localises to the cytoplasm. The catalysed reaction is tRNA(Gly) + glycine + ATP = glycyl-tRNA(Gly) + AMP + diphosphate. The polypeptide is Glycine--tRNA ligase alpha subunit (Methylobacterium radiotolerans (strain ATCC 27329 / DSM 1819 / JCM 2831 / NBRC 15690 / NCIMB 10815 / 0-1)).